Here is a 712-residue protein sequence, read N- to C-terminus: MPNMRHRVNSLTEEHEENMQMSKLTGHLSSISTLFPVKNDASQTLTLGQLGLGCPCQLVSLWHYLRKNSPSRAVNIKIFESQFDALADFNLKLASLTSPDPRLPRDDEQSTMVEALLRADIVAIEGCQRLIFDDGRVILDIYLGDTLSQLKCILPTSVKGDMTDNSALIAHWNITEKVKAGSLDQAMLWQIAKLSRDNAALSFTDPESKETRQMMALARSVGLRTLETTVSETTVPETQQQTENKNLDTASDAIPLQERRALRHAQSDKFQYCPVSAANEGDEDCDGEIAIIGGGVASTHLALSLAQRNKKVRIFCSDANFAQQASGNKQGAVYPLLTPDNGHLSHYFQQGYLFTRRRLQALVDDKFAVSYDFCGVLQTGFDDRSSARLDKIINGQSWNEKMAYPIDAASATQIAGIDIDKAGIYYPLGGWICPHEFTRAAFDKAARLSDVSVEFNADITRIEQREGLWYLYKSVNVQHSCTDSHTPDDSEELEIGPFANLVLANGQGLTQFKQSEKLPATGFRGQVSHIPSRNALTKLSTVLCSHGYLTPGNNNFHCTGASYVKNPTNLDYCATEQVENLHKIRHSYVDKPWTEDVDITGHSARVGVRMVTRDHAPMMGCAPDTDSMLAQYEQHQHTKESIKFWKETPAPTHKGLFILGGLGSRGLTSGPLAAEALAAQLCGEVIPLSMPMLEMLNPNRFWMRKLIKGKAL.

The interval M1 to D268 is tRNA (mnm(5)s(2)U34)-methyltransferase. Positions I292–L712 are FAD-dependent cmnm(5)s(2)U34 oxidoreductase.

It in the N-terminal section; belongs to the methyltransferase superfamily. tRNA (mnm(5)s(2)U34)-methyltransferase family. The protein in the C-terminal section; belongs to the DAO family. The cofactor is FAD.

The protein localises to the cytoplasm. It catalyses the reaction 5-aminomethyl-2-thiouridine(34) in tRNA + S-adenosyl-L-methionine = 5-methylaminomethyl-2-thiouridine(34) in tRNA + S-adenosyl-L-homocysteine + H(+). Functionally, catalyzes the last two steps in the biosynthesis of 5-methylaminomethyl-2-thiouridine (mnm(5)s(2)U) at the wobble position (U34) in tRNA. Catalyzes the FAD-dependent demodification of cmnm(5)s(2)U34 to nm(5)s(2)U34, followed by the transfer of a methyl group from S-adenosyl-L-methionine to nm(5)s(2)U34, to form mnm(5)s(2)U34. The chain is tRNA 5-methylaminomethyl-2-thiouridine biosynthesis bifunctional protein MnmC from Shewanella sediminis (strain HAW-EB3).